Reading from the N-terminus, the 68-residue chain is uncharacterized protein (68 aa).

Residues 1–21 (MELYREYPAWLIFLRRTYAVA) form the signal peptide.

This is an uncharacterized protein from Escherichia coli O157:H7.